The following is a 725-amino-acid chain: Gamma-tubulin complex component 5 (725 aa).

A disordered region spans residues 222–246 (TENEEKMSDNASASSGSDQGPSSRQ). The segment covering 232-244 (ASASSGSDQGPSS) has biased composition (low complexity).

This sequence belongs to the TUBGCP family. In terms of assembly, component of the gamma-tubulin ring complex (gTuRC) consisting of TUBGCP2, TUBGCP3, TUBGCP4, TUBGCP5 and TUBGCP6 and gamma-tubulin TUBG1 or TUBG2. TUBGCP2, TUBGCP3, TUBGCP4, TUBGCP5 and TUBGCP6 assemble in a 5:5:2:1:1 stoichiometry; each is associated with a gamma-tubulin, thereby arranging 14 gamma-tubulins in a helical manner. Gamma-tubulin at the first position is blocked by TUBGCP3 at the last position, allowing 13 protafilaments to grow into a microtubule. The gTuRC (via TUBGCP3 and TUBGCP6) interacts with ACTB and MZT1; the interactions form a luminal bridge that stabilizes the initial structure during complex assembly. The gTuRC (via TUBGCP2) interacts with MZT2A/MZT2B and CDK5RAP2 (via CM1 motif); the interactions play a role in gTuRC activation.

It is found in the cytoplasm. The protein localises to the cytoskeleton. Its subcellular location is the microtubule organizing center. It localises to the centrosome. Component of the gamma-tubulin ring complex (gTuRC) which mediates microtubule nucleation. The gTuRC regulates the minus-end nucleation of alpha-beta tubulin heterodimers that grow into microtubule protafilaments, a critical step in centrosome duplication and spindle formation. The sequence is that of Gamma-tubulin complex component 5 (TUBGCP5) from Macaca fascicularis (Crab-eating macaque).